The following is a 343-amino-acid chain: Endoplasmic reticulum-resident calcium binding protein (343 aa).

An N-terminal signal peptide occupies residues 1-26 (MMKINLYKLLCFICVIFLLHKNVVRS). 5 EF-hand domains span residues 59–94 (GAKERIEKLFHLIDKNNDKEITEEELNTWSSFLKNE), 95–130 (IFLKQVQAEMGQIDSDKDGFISLNELNDAFAQNLDA), 135–170 (KHSEGLLKRFQIVDKDKDGKLSINEVGLLIDPMKDE), 172–207 (LKELEINEILEHHDVNKDGKISLDEFKQTRSDESSG), and 210–245 (KDDEMALDDFNFFDANKDGFIDKEEIIKVYFDPAHE). Positions 72, 74, 76, 78, 83, 108, 110, 112, 119, 148, 150, 152, 154, 159, 185, 187, 189, 191, 196, 223, 225, 227, and 234 each coordinate Ca(2+). Residues 313-331 (EDDDMDADNTEDDKDEADD) show a composition bias toward acidic residues. The disordered stretch occupies residues 313–343 (EDDDMDADNTEDDKDEADDASQQKSPAIDEL).

It belongs to the CREC family.

The protein resides in the endoplasmic reticulum. In terms of biological role, calcium-binding protein. Required for schizont to ring transition. Required for the breakdown of the parasitophorous vacuole membrane during egress. Required for the proteolytic maturation of apical membrane antigen 1 (AMA-1) during egress. Required for the proteolytic maturation of subtilisin-like protease 1 (SUB1) during egress. Required for the proteolytic maturation of plasmepsin X (PMX) during egress. The chain is Endoplasmic reticulum-resident calcium binding protein from Plasmodium falciparum (isolate 3D7).